The following is a 272-amino-acid chain: Tryptophan synthase alpha chain (272 aa).

Catalysis depends on proton acceptor residues Glu-53 and Asp-64.

This sequence belongs to the TrpA family. As to quaternary structure, tetramer of two alpha and two beta chains.

It catalyses the reaction (1S,2R)-1-C-(indol-3-yl)glycerol 3-phosphate + L-serine = D-glyceraldehyde 3-phosphate + L-tryptophan + H2O. It participates in amino-acid biosynthesis; L-tryptophan biosynthesis; L-tryptophan from chorismate: step 5/5. Functionally, the alpha subunit is responsible for the aldol cleavage of indoleglycerol phosphate to indole and glyceraldehyde 3-phosphate. The chain is Tryptophan synthase alpha chain from Xanthomonas campestris pv. campestris (strain B100).